Here is a 305-residue protein sequence, read N- to C-terminus: Homeobox protein NANOGP8 (305 aa).

The segment at 1–96 is disordered; that stretch reads MSVDPACPQS…KEDKVPVKKQ (96 aa). Residues 65-82 show a composition bias toward polar residues; it reads SPDSSTSPKGKQPTSAEN. The segment at residues 95 to 154 is a DNA-binding region (homeobox); it reads KQKTRTVFSSTQLCVLNDRFQRQKYLSLQQMQELSNILNLSYKQVKTWFQNQRMKSKRWQ. 8 repeat units span residues 196–200, 201–205, 206–210, 216–220, 221–225, 226–230, 231–235, and 236–240. An 8 X repeats starting with a Trp in each unit region spans residues 196–240; that stretch reads WSNQTWNNSTWSNQTQNIQSWSNHSWNTQTWCTQSWNNQAWNSPF. The segment at 196–240 is sufficient for transactivation activity; the sequence is WSNQTWNNSTWSNQTQNIQSWSNHSWNTQTWCTQSWNNQAWNSPF. The sufficient for strong transactivation activity stretch occupies residues 241 to 305; it reads YNCGEESLQS…YSMNMQPEDV (65 aa).

This sequence belongs to the Nanog homeobox family.

Its subcellular location is the nucleus. Its function is as follows. May act as a transcription regulator. When overexpressed, promotes entry of cells into S phase and cell proliferation. This is Homeobox protein NANOGP8 (NANOGP8) from Homo sapiens (Human).